Reading from the N-terminus, the 84-residue chain is Small ribosomal subunit protein uS17 (84 aa).

It belongs to the universal ribosomal protein uS17 family. Part of the 30S ribosomal subunit.

Functionally, one of the primary rRNA binding proteins, it binds specifically to the 5'-end of 16S ribosomal RNA. The protein is Small ribosomal subunit protein uS17 of Citrobacter koseri (strain ATCC BAA-895 / CDC 4225-83 / SGSC4696).